Here is a 366-residue protein sequence, read N- to C-terminus: Ribosomal RNA large subunit methyltransferase M (366 aa).

S-adenosyl-L-methionine contacts are provided by residues Ser188, 221–224, Asp240, Asp260, and Asp277; that span reads CPGG. Lys306 acts as the Proton acceptor in catalysis.

The protein belongs to the class I-like SAM-binding methyltransferase superfamily. RNA methyltransferase RlmE family. RlmM subfamily. As to quaternary structure, monomer.

The protein localises to the cytoplasm. It carries out the reaction cytidine(2498) in 23S rRNA + S-adenosyl-L-methionine = 2'-O-methylcytidine(2498) in 23S rRNA + S-adenosyl-L-homocysteine + H(+). Its function is as follows. Catalyzes the 2'-O-methylation at nucleotide C2498 in 23S rRNA. This is Ribosomal RNA large subunit methyltransferase M from Shigella sonnei (strain Ss046).